The chain runs to 692 residues: Methionine--tRNA ligase (692 aa).

The short motif at 26 to 36 (PYANGSIHLGH) is the 'HIGH' region element. Zn(2+)-binding residues include cysteine 157, cysteine 160, cysteine 170, and cysteine 173. Positions 342 to 346 (KMSKS) match the 'KMSKS' region motif. An ATP-binding site is contributed by lysine 345. Residues 590–692 (DFAKVDLRIA…SGAQPGMRVK (103 aa)) enclose the tRNA-binding domain.

It belongs to the class-I aminoacyl-tRNA synthetase family. MetG type 1 subfamily. In terms of assembly, homodimer. Requires Zn(2+) as cofactor.

It is found in the cytoplasm. The enzyme catalyses tRNA(Met) + L-methionine + ATP = L-methionyl-tRNA(Met) + AMP + diphosphate. Is required not only for elongation of protein synthesis but also for the initiation of all mRNA translation through initiator tRNA(fMet) aminoacylation. The polypeptide is Methionine--tRNA ligase (Methylobacillus flagellatus (strain ATCC 51484 / DSM 6875 / VKM B-1610 / KT)).